Consider the following 364-residue polypeptide: Cobalt-precorrin-5B C(1)-methyltransferase (364 aa).

Belongs to the CbiD family.

It catalyses the reaction Co-precorrin-5B + S-adenosyl-L-methionine = Co-precorrin-6A + S-adenosyl-L-homocysteine. The protein operates within cofactor biosynthesis; adenosylcobalamin biosynthesis; cob(II)yrinate a,c-diamide from sirohydrochlorin (anaerobic route): step 6/10. Catalyzes the methylation of C-1 in cobalt-precorrin-5B to form cobalt-precorrin-6A. This chain is Cobalt-precorrin-5B C(1)-methyltransferase, found in Thermoplasma acidophilum (strain ATCC 25905 / DSM 1728 / JCM 9062 / NBRC 15155 / AMRC-C165).